The following is a 212-amino-acid chain: Octanoyltransferase (212 aa).

The 175-residue stretch at 34–208 (GQRQDTLILL…AFERQFNARC (175 aa)) folds into the BPL/LPL catalytic domain. Substrate is bound by residues 72–79 (RGGQVTYH), 139–141 (SIG), and 152–154 (GLS). C170 (acyl-thioester intermediate) is an active-site residue.

It belongs to the LipB family.

The protein resides in the cytoplasm. It catalyses the reaction octanoyl-[ACP] + L-lysyl-[protein] = N(6)-octanoyl-L-lysyl-[protein] + holo-[ACP] + H(+). It participates in protein modification; protein lipoylation via endogenous pathway; protein N(6)-(lipoyl)lysine from octanoyl-[acyl-carrier-protein]: step 1/2. Catalyzes the transfer of endogenously produced octanoic acid from octanoyl-acyl-carrier-protein onto the lipoyl domains of lipoate-dependent enzymes. Lipoyl-ACP can also act as a substrate although octanoyl-ACP is likely to be the physiological substrate. In Magnetococcus marinus (strain ATCC BAA-1437 / JCM 17883 / MC-1), this protein is Octanoyltransferase.